The primary structure comprises 267 residues: Diphthine--ammonia ligase (267 aa).

Residue Tyr97 is modified to Phosphotyrosine.

The protein belongs to the Diphthine--ammonia ligase family.

It catalyses the reaction diphthine-[translation elongation factor 2] + NH4(+) + ATP = diphthamide-[translation elongation factor 2] + AMP + diphosphate + H(+). It functions in the pathway protein modification; peptidyl-diphthamide biosynthesis. In terms of biological role, amidase that catalyzes the last step of diphthamide biosynthesis using ammonium and ATP. Diphthamide biosynthesis consists in the conversion of an L-histidine residue in the translation elongation factor eEF-2 (EEF2) to diphthamide. The protein is Diphthine--ammonia ligase (Dph6) of Rattus norvegicus (Rat).